The primary structure comprises 101 residues: Small ribosomal subunit protein uS14 (101 aa).

This sequence belongs to the universal ribosomal protein uS14 family. As to quaternary structure, part of the 30S ribosomal subunit. Contacts proteins S3 and S10.

Binds 16S rRNA, required for the assembly of 30S particles and may also be responsible for determining the conformation of the 16S rRNA at the A site. The sequence is that of Small ribosomal subunit protein uS14 from Vesicomyosocius okutanii subsp. Calyptogena okutanii (strain HA).